The sequence spans 141 residues: Large ribosomal subunit protein uL11 (141 aa).

Belongs to the universal ribosomal protein uL11 family. Part of the ribosomal stalk of the 50S ribosomal subunit. Interacts with L10 and the large rRNA to form the base of the stalk. L10 forms an elongated spine to which L12 dimers bind in a sequential fashion forming a multimeric L10(L12)X complex. Post-translationally, one or more lysine residues are methylated.

In terms of biological role, forms part of the ribosomal stalk which helps the ribosome interact with GTP-bound translation factors. This is Large ribosomal subunit protein uL11 from Thermotoga neapolitana (strain ATCC 49049 / DSM 4359 / NBRC 107923 / NS-E).